The sequence spans 467 residues: Fumarate hydratase class II (467 aa).

Substrate-binding positions include 98-100 (SGT), arginine 126, 129-132 (HPND), 139-141 (SSN), and threonine 187. Histidine 188 serves as the catalytic Proton donor/acceptor. Serine 318 is a catalytic residue. Substrate contacts are provided by residues serine 319 and 324-326 (KVN).

Belongs to the class-II fumarase/aspartase family. Fumarase subfamily. As to quaternary structure, homotetramer.

It is found in the cytoplasm. The enzyme catalyses (S)-malate = fumarate + H2O. It functions in the pathway carbohydrate metabolism; tricarboxylic acid cycle; (S)-malate from fumarate: step 1/1. Functionally, involved in the TCA cycle. Catalyzes the stereospecific interconversion of fumarate to L-malate. This Escherichia coli O6:H1 (strain CFT073 / ATCC 700928 / UPEC) protein is Fumarate hydratase class II.